The primary structure comprises 415 residues: Acetylornithine aminotransferase (415 aa).

Pyridoxal 5'-phosphate contacts are provided by residues 115 to 116 and Phe-148; that span reads GA. Arg-151 lines the N(2)-acetyl-L-ornithine pocket. 239–242 contributes to the pyridoxal 5'-phosphate binding site; sequence DEVQ. The residue at position 268 (Lys-268) is an N6-(pyridoxal phosphate)lysine. Ser-295 provides a ligand contact to N(2)-acetyl-L-ornithine. A pyridoxal 5'-phosphate-binding site is contributed by Thr-296.

The protein belongs to the class-III pyridoxal-phosphate-dependent aminotransferase family. ArgD subfamily. In terms of assembly, homodimer. Pyridoxal 5'-phosphate serves as cofactor.

Its subcellular location is the cytoplasm. It catalyses the reaction N(2)-acetyl-L-ornithine + 2-oxoglutarate = N-acetyl-L-glutamate 5-semialdehyde + L-glutamate. It functions in the pathway amino-acid biosynthesis; L-arginine biosynthesis; N(2)-acetyl-L-ornithine from L-glutamate: step 4/4. This is Acetylornithine aminotransferase from Prochlorococcus marinus subsp. pastoris (strain CCMP1986 / NIES-2087 / MED4).